A 431-amino-acid chain; its full sequence is Histidinol dehydrogenase (431 aa).

3 residues coordinate NAD(+): Y130, Q192, and N215. Substrate contacts are provided by S238, Q260, and H263. Residues Q260 and H263 each contribute to the Zn(2+) site. Residues E328 and H329 each act as proton acceptor in the active site. Substrate-binding residues include H329, D362, E416, and H421. D362 provides a ligand contact to Zn(2+). Residue H421 coordinates Zn(2+).

The protein belongs to the histidinol dehydrogenase family. It depends on Zn(2+) as a cofactor.

The catalysed reaction is L-histidinol + 2 NAD(+) + H2O = L-histidine + 2 NADH + 3 H(+). The protein operates within amino-acid biosynthesis; L-histidine biosynthesis; L-histidine from 5-phospho-alpha-D-ribose 1-diphosphate: step 9/9. In terms of biological role, catalyzes the sequential NAD-dependent oxidations of L-histidinol to L-histidinaldehyde and then to L-histidine. This chain is Histidinol dehydrogenase, found in Thermosynechococcus vestitus (strain NIES-2133 / IAM M-273 / BP-1).